A 385-amino-acid polypeptide reads, in one-letter code: uncharacterized protein (385 aa).

9 helical membrane-spanning segments follow: residues 12–32, 50–70, 90–110, 132–152, 195–215, 233–253, 272–292, 312–332, and 335–355; these read GVAILGILLLNISAFGLPKAA, WAFLDLIGQVKFLTLFALLFG, LLVLLGFIHGLLFWDGDILLA, FNTGVMLYLVGLGVLLLLGLI, LALGAQYGWQLAGMMLIGAAL, TGFVLVAIGVTINLPAIALQW, LSAPFQAIGYASLFYGFWPQL, YLLQTLICTTLFYHLGLFMHF, and LELLAFVIPVWLANILFSVIW.

It to B.subtilis YxaH and YrkO.

The protein resides in the cell membrane. In terms of biological role, involved in transport. This is an uncharacterized protein from Escherichia coli (strain K12).